Reading from the N-terminus, the 106-residue chain is Toxin-like structure LSTX-D4 (106 aa).

The signal sequence occupies residues Met1 to Ser20. A propeptide spanning residues Glu21 to Arg41 is cleaved from the precursor. 4 disulfides stabilise this stretch: Cys45-Cys60, Cys52-Cys69, Cys59-Cys85, and Cys71-Cys83.

The protein belongs to the neurotoxin 19 (CSTX) family. 02 (D7) subfamily. As to expression, expressed by the venom gland.

It is found in the secreted. The polypeptide is Toxin-like structure LSTX-D4 (Lycosa singoriensis (Wolf spider)).